The chain runs to 185 residues: Ribosome-recycling factor (185 aa).

The protein belongs to the RRF family.

Its subcellular location is the cytoplasm. Its function is as follows. Responsible for the release of ribosomes from messenger RNA at the termination of protein biosynthesis. May increase the efficiency of translation by recycling ribosomes from one round of translation to another. The sequence is that of Ribosome-recycling factor from Clostridium perfringens (strain ATCC 13124 / DSM 756 / JCM 1290 / NCIMB 6125 / NCTC 8237 / Type A).